The following is a 176-amino-acid chain: MDLPGPIHDFLLVFLGSGLLVGGLGVVLLPNPIFSAFSLGFVLVCISLLYILSNSHFVAAAQLLIYVGAINVLIIFAVMFMNDSEYSTDFNLWTVGDGITSLVCTTILFSLISTILDTSWYGVIWTTRLNQLLEQDLISNSQQIGIHLSTDFFLPFELISIILLVALVGAISVARQ.

5 helical membrane-spanning segments follow: residues 10 to 30 (FLLVFLGSGLLVGGLGVVLLP), 32 to 52 (PIFSAFSLGFVLVCISLLYIL), 61 to 81 (AQLLIYVGAINVLIIFAVMFM), 92 to 112 (LWTVGDGITSLVCTTILFSLI), and 152 to 172 (FFLPFELISIILLVALVGAIS).

This sequence belongs to the complex I subunit 6 family. In terms of assembly, NDH is composed of at least 16 different subunits, 5 of which are encoded in the nucleus.

It is found in the plastid. The protein resides in the chloroplast thylakoid membrane. It catalyses the reaction a plastoquinone + NADH + (n+1) H(+)(in) = a plastoquinol + NAD(+) + n H(+)(out). It carries out the reaction a plastoquinone + NADPH + (n+1) H(+)(in) = a plastoquinol + NADP(+) + n H(+)(out). Functionally, NDH shuttles electrons from NAD(P)H:plastoquinone, via FMN and iron-sulfur (Fe-S) centers, to quinones in the photosynthetic chain and possibly in a chloroplast respiratory chain. The immediate electron acceptor for the enzyme in this species is believed to be plastoquinone. Couples the redox reaction to proton translocation, and thus conserves the redox energy in a proton gradient. In Lobularia maritima (Sweet alyssum), this protein is NAD(P)H-quinone oxidoreductase subunit 6, chloroplastic (ndhG).